Reading from the N-terminus, the 364-residue chain is UDP-N-acetylglucosamine--N-acetylmuramyl-(pentapeptide) pyrophosphoryl-undecaprenol N-acetylglucosamine transferase (364 aa).

UDP-N-acetyl-alpha-D-glucosamine-binding positions include 16–18 (TGG), asparagine 128, arginine 166, serine 195, isoleucine 249, and glutamine 294.

This sequence belongs to the glycosyltransferase 28 family. MurG subfamily.

It is found in the cell inner membrane. It carries out the reaction di-trans,octa-cis-undecaprenyl diphospho-N-acetyl-alpha-D-muramoyl-L-alanyl-D-glutamyl-meso-2,6-diaminopimeloyl-D-alanyl-D-alanine + UDP-N-acetyl-alpha-D-glucosamine = di-trans,octa-cis-undecaprenyl diphospho-[N-acetyl-alpha-D-glucosaminyl-(1-&gt;4)]-N-acetyl-alpha-D-muramoyl-L-alanyl-D-glutamyl-meso-2,6-diaminopimeloyl-D-alanyl-D-alanine + UDP + H(+). It functions in the pathway cell wall biogenesis; peptidoglycan biosynthesis. Functionally, cell wall formation. Catalyzes the transfer of a GlcNAc subunit on undecaprenyl-pyrophosphoryl-MurNAc-pentapeptide (lipid intermediate I) to form undecaprenyl-pyrophosphoryl-MurNAc-(pentapeptide)GlcNAc (lipid intermediate II). The chain is UDP-N-acetylglucosamine--N-acetylmuramyl-(pentapeptide) pyrophosphoryl-undecaprenol N-acetylglucosamine transferase from Chromohalobacter salexigens (strain ATCC BAA-138 / DSM 3043 / CIP 106854 / NCIMB 13768 / 1H11).